The following is a 436-amino-acid chain: Transcription termination factor Rho (436 aa).

One can recognise a Rho RNA-BD domain in the interval 65–140 (LVFVKGVLEI…IRMESVNGLP (76 aa)). ATP is bound by residues 185–190 (GKGQRG), 197–202 (KAGKTV), and Arg228.

Belongs to the Rho family. Homohexamer. The homohexamer assembles into an open ring structure.

Its function is as follows. Facilitates transcription termination by a mechanism that involves Rho binding to the nascent RNA, activation of Rho's RNA-dependent ATPase activity, and release of the mRNA from the DNA template. The chain is Transcription termination factor Rho from Aquifex aeolicus (strain VF5).